Reading from the N-terminus, the 662-residue chain is Phosphomethylpyrimidine synthase (662 aa).

Substrate contacts are provided by residues Asn-235, Met-264, Tyr-293, His-329, 349-351 (SRG), 390-393 (DGMR), and Glu-429. Residue His-433 coordinates Zn(2+). Substrate is bound at residue Tyr-456. His-497 contributes to the Zn(2+) binding site. The [4Fe-4S] cluster site is built by Cys-577, Cys-580, and Cys-585.

This sequence belongs to the ThiC family. Homodimer. [4Fe-4S] cluster is required as a cofactor.

The enzyme catalyses 5-amino-1-(5-phospho-beta-D-ribosyl)imidazole + S-adenosyl-L-methionine = 4-amino-2-methyl-5-(phosphooxymethyl)pyrimidine + CO + 5'-deoxyadenosine + formate + L-methionine + 3 H(+). It functions in the pathway cofactor biosynthesis; thiamine diphosphate biosynthesis. In terms of biological role, catalyzes the synthesis of the hydroxymethylpyrimidine phosphate (HMP-P) moiety of thiamine from aminoimidazole ribotide (AIR) in a radical S-adenosyl-L-methionine (SAM)-dependent reaction. This Shewanella halifaxensis (strain HAW-EB4) protein is Phosphomethylpyrimidine synthase.